The following is a 140-amino-acid chain: uncharacterized protein (140 aa).

The disordered stretch occupies residues 80-115 (KNGTRRHALPSPLEGSFQPGRQIPPPQTPSTDPQTL).

This is an uncharacterized protein from Homo sapiens (Human).